The sequence spans 356 residues: MAEKAKAEGNNFVKKLLSSNLTWSIVAFILLVIICTIFQHDFLALSWNSNTGGLAGPLITMLQESARYLMIATGMTLVISTAGIDLSVGSVMAVAGAAAMQTLSNGMNVWLSILIALAVGLAIGCVNGALVSFLGLQPFITTLIMMLAGRGMAKVITSGENTDASAVAGNEPLKWFANGFILGIPANFVIAVIIVILVGLLCRKTAMGMMIEAVGINQEASRMTGIKPKKILFLVYAISGFLAAIAGLFATASVMRVDVVKTGQDLEMYAILAVVIGGTSLLGGKFSLAGSAVGAVIIAMIRKTIITLGVNAEATPAFFAVVVIVICVMQAPKIHNLSANMKRKRALKAQAKAVAA.

7 helical membrane passes run 25–45 (IVAF…FLAL), 77–97 (LVIS…VAGA), 113–133 (ILIA…LVSF), 180–200 (FILG…LVGL), 231–251 (ILFL…LFAT), 268–290 (MYAI…SLAG), and 308–328 (LGVN…VICV).

This sequence belongs to the binding-protein-dependent transport system permease family. In terms of assembly, the complex is composed of an ATP-binding protein (FruK), two transmembrane proteins (FruF and FruG) and a solute-binding protein (FruE).

It is found in the cell membrane. Functionally, part of the high-affinity ABC transporter complex FruEKFG involved in fructose uptake. Can also transport ribose and xylose, with lower affinity. Probably responsible for the translocation of the substrate across the membrane. In Bifidobacterium longum (strain NCC 2705), this protein is Fructose import permease protein FruF.